Reading from the N-terminus, the 77-residue chain is Translation initiation factor IF-1, chloroplastic (77 aa).

One can recognise an S1-like domain in the interval methionine 1–arginine 71.

Belongs to the IF-1 family. As to quaternary structure, component of the 30S ribosomal translation pre-initiation complex which assembles on the 30S ribosome in the order IF-2 and IF-3, IF-1 and N-formylmethionyl-tRNA(fMet); mRNA recruitment can occur at any time during PIC assembly.

Its subcellular location is the plastid. The protein localises to the chloroplast. In terms of biological role, one of the essential components for the initiation of protein synthesis. Stabilizes the binding of IF-2 and IF-3 on the 30S subunit to which N-formylmethionyl-tRNA(fMet) subsequently binds. Helps modulate mRNA selection, yielding the 30S pre-initiation complex (PIC). Upon addition of the 50S ribosomal subunit IF-1, IF-2 and IF-3 are released leaving the mature 70S translation initiation complex. This Cabomba caroliniana (Carolina fanwort) protein is Translation initiation factor IF-1, chloroplastic.